The following is a 333-amino-acid chain: Large ribosomal subunit protein uL3 (333 aa).

2 stretches are compositionally biased toward basic residues: residues 1–10 and 17–26; these read MGMKRNRPRR and PRKRAKRPVP. Residues 1–29 form a disordered region; sequence MGMKRNRPRRGSLAFSPRKRAKRPVPKIR.

The protein belongs to the universal ribosomal protein uL3 family. As to quaternary structure, part of the 50S ribosomal subunit. Forms a cluster with proteins L14 and L24e.

In terms of biological role, one of the primary rRNA binding proteins, it binds directly near the 3'-end of the 23S rRNA, where it nucleates assembly of the 50S subunit. This is Large ribosomal subunit protein uL3 from Methanococcus aeolicus (strain ATCC BAA-1280 / DSM 17508 / OCM 812 / Nankai-3).